The chain runs to 560 residues: Putative protease Do-like 11, mitochondrial (560 aa).

The transit peptide at methionine 1–arginine 65 directs the protein to the mitochondrion. Residues threonine 117 to serine 302 form a serine protease region. Residues histidine 150, aspartate 184, and serine 258 each act as charge relay system in the active site. The region spanning isoleucine 288 to glutamate 384 is the PDZ domain.

The protein belongs to the peptidase S1C family.

It localises to the mitochondrion membrane. Putative serine protease. This Arabidopsis thaliana (Mouse-ear cress) protein is Putative protease Do-like 11, mitochondrial (DEGP11).